The following is a 572-amino-acid chain: Urease subunit alpha (572 aa).

The region spanning 134 to 572 (GGIDSHIHFI…LPMTQRYFLF (439 aa)) is the Urease domain. Ni(2+)-binding residues include His139, His141, and Lys222. N6-carboxylysine is present on Lys222. Residue His224 coordinates substrate. Ni(2+)-binding residues include His251 and His277. The active-site Proton donor is the His325. Asp365 contributes to the Ni(2+) binding site.

Belongs to the metallo-dependent hydrolases superfamily. Urease alpha subunit family. As to quaternary structure, heterotrimer of UreA (gamma), UreB (beta) and UreC (alpha) subunits. Three heterotrimers associate to form the active enzyme. Requires Ni cation as cofactor. Carboxylation allows a single lysine to coordinate two nickel ions.

The protein resides in the cytoplasm. The catalysed reaction is urea + 2 H2O + H(+) = hydrogencarbonate + 2 NH4(+). The protein operates within nitrogen metabolism; urea degradation; CO(2) and NH(3) from urea (urease route): step 1/1. In Polaromonas sp. (strain JS666 / ATCC BAA-500), this protein is Urease subunit alpha.